The following is an 89-amino-acid chain: Small ribosomal subunit protein uS15 (89 aa).

Belongs to the universal ribosomal protein uS15 family. As to quaternary structure, part of the 30S ribosomal subunit. Forms a bridge to the 50S subunit in the 70S ribosome, contacting the 23S rRNA.

One of the primary rRNA binding proteins, it binds directly to 16S rRNA where it helps nucleate assembly of the platform of the 30S subunit by binding and bridging several RNA helices of the 16S rRNA. Functionally, forms an intersubunit bridge (bridge B4) with the 23S rRNA of the 50S subunit in the ribosome. This chain is Small ribosomal subunit protein uS15, found in Limosilactobacillus reuteri (strain DSM 20016) (Lactobacillus reuteri).